Here is an 831-residue protein sequence, read N- to C-terminus: MWHPALGPGWKPLLALALALTSLRGVRGIEEEPNSGGSFQIVTFKWHHVQDPYIIALWILVASLAKIVFHLSHKVTSVVPESALLIVLGLVLGGIVWAADHIASFTLTPTLFFFYLLPPIVLDAGYFMPNRLFFGNLGTILLYAVIGTIWNAATTGLSLYGVFLSGLMGELKIGLLDFLLFGSLIAAVDPVAVLAVFEEVHVNEVLFIIVFGESLLNDAVTVVLYNVFESFVTLGGDAVTGVDCVKGIVSFFVVSLGGTLVGVIFAFLLSLVTRFTKHVRIIEPGFVFVISYLSYLTSEMLSLSAILAITFCGICCQKYVKANISEQSATTVRYTMKMLASGAETIIFMFLGISAVDPVIWTWNTAFVLLTLVFISVYRAIGVVLQTWILNRYRMVQLETIDQVVMSYGGLRGAVAYALVVLLDEKKVKEKNLFVSTTLIVVFFTVIFQGLTIKPLVQWLKVKRSEQREPKLNEKLHGRAFDHILSAIEDISGQIGHNYLRDKWSNFDRKFLSKVLMRRSAQKSRDRILNVFHELNLKDAISYVAEGERRGSLAFIRSPSTDNMVNVDFSTPRPSTVEASVSYFLRENVSAVCLDMQSLEQRRRSIRDTEDMVTHHTLQQYLYKPRQEYKHLYSRHELTPNEDEKQDKEIFHRTMRKRLESFKSAKLGINQNKKAAKLYKRERAQKRRNSSIPNGKLPMENLAHNFTIKEKDLELSEPEEATNYEEISGGIEFLASVTKDVASDSGAGIDNPVFSPDEDLDPSILSRVPPWLSPGETVVPSQRARVQIPNSPSNFRRLTPFRLSNKSVDSFLQADGPEEQLQPASPESTHM.

Residues 1-28 (MWHPALGPGWKPLLALALALTSLRGVRG) form the signal peptide. The Extracellular portion of the chain corresponds to 29 to 48 (IEEEPNSGGSFQIVTFKWHH). Residues 49-71 (VQDPYIIALWILVASLAKIVFHL) form a helical membrane-spanning segment. The Cytoplasmic portion of the chain corresponds to 72-79 (SHKVTSVV). A helical membrane pass occupies residues 80 to 99 (PESALLIVLGLVLGGIVWAA). Topologically, residues 100 to 108 (DHIASFTLT) are extracellular. The helical transmembrane segment at 109–126 (PTLFFFYLLPPIVLDAGY) threads the bilayer. Residues 127-129 (FMP) lie on the Cytoplasmic side of the membrane. Residues 130–165 (NRLFFGNLGTILLYAVIGTIWNAATTGLSLYGVFLS) traverse the membrane as a helical segment. A 1,2-diacyl-sn-glycero-3-phospho-(1D-myo-inositol) is bound by residues Gly-135, Gly-138, and Thr-139. Residues 166–178 (GLMGELKIGLLDF) lie on the Extracellular side of the membrane. The helical transmembrane segment at 179 to 200 (LLFGSLIAAVDPVAVLAVFEEV) threads the bilayer. The Cytoplasmic segment spans residues 201-202 (HV). Residues 203–234 (NEVLFIIVFGESLLNDAVTVVLYNVFESFVTL) form a helical membrane-spanning segment. The Extracellular segment spans residues 235–241 (GGDAVTG). A helical membrane pass occupies residues 242-276 (VDCVKGIVSFFVVSLGGTLVGVIFAFLLSLVTRFT). Topologically, residues 277-278 (KH) are cytoplasmic. A helical transmembrane segment spans residues 279–301 (VRIIEPGFVFVISYLSYLTSEML). Residues 302 to 303 (SL) are Extracellular-facing. A helical transmembrane segment spans residues 304 to 320 (SAILAITFCGICCQKYV). At 321–327 (KANISEQ) the chain is on the cytoplasmic side. A helical membrane pass occupies residues 328-356 (SATTVRYTMKMLASGAETIIFMFLGISAV). Over 357–364 (DPVIWTWN) the chain is Extracellular. The helical transmembrane segment at 365–386 (TAFVLLTLVFISVYRAIGVVLQ) threads the bilayer. Residues 387 to 399 (TWILNRYRMVQLE) lie on the Cytoplasmic side of the membrane. An a 1,2-diacyl-sn-glycero-3-phospho-(1D-myo-inositol)-binding site is contributed by Met-395. A helical membrane pass occupies residues 400 to 423 (TIDQVVMSYGGLRGAVAYALVVLL). The Extracellular segment spans residues 424–430 (DEKKVKE). Residues 431–464 (KNLFVSTTLIVVFFTVIFQGLTIKPLVQWLKVKR) form a helical membrane-spanning segment. The Cytoplasmic portion of the chain corresponds to 465–831 (SEQREPKLNE…QPASPESTHM (367 aa)). 3 residues coordinate a 1,2-diacyl-sn-glycero-3-phospho-(1D-myo-inositol): Gln-494, Ile-495, and His-497. Ser-552 and Ser-560 each carry phosphoserine. The segment at 573-587 (RPSTVEASVSYFLRE) is interaction with EZR. The interaction with NHERF4 stretch occupies residues 588-665 (NVSAVCLDMQ…RKRLESFKSA (78 aa)). The interaction with AHCYL1 stretch occupies residues 589–693 (VSAVCLDMQS…AQKRRNSSIP (105 aa)). Ser-590 and Ser-605 each carry phosphoserine. Ser-661 carries the post-translational modification Phosphoserine; by SGK1. A phosphoserine mark is found at Ser-716, Ser-807, and Ser-810. Residues 808–831 (VDSFLQADGPEEQLQPASPESTHM) form a disordered region. Residues 822–831 (QPASPESTHM) show a composition bias toward polar residues.

It belongs to the monovalent cation:p,roton antiporter 1 (CPA1) transporter (TC 2.A.36) family. As to quaternary structure, homodimer. Found in the forms of complex and dynamic macromolecular complexes. Binds NHERF1 and NHERF2. Interacts with NHERF4 and interactions decrease in response to elevated calcium ion levels. Interacts with PDZK1 (via C-terminal PDZ domain). Interacts with CHP1; this interaction increases trafficking and activity at the plasma membrane of SLC9A3. Interacts with CHP2 and SHANK2. Interacts with AHCYL1; the interaction is required for SLC9A3 activity. Interacts with EZR; interaction targets SLC9A3 to the apical membrane. Interacts with SNX27 (via PDZ domains); directs SLC9A3 membrane insertion from early endosomes to the plasma membrane. Post-translationally, phosphorylated by PRKACA at Ser-552 and Ser-605, which inhibits activity. Phosphorylation of Ser-605 is essential for cAMP-mediated inhibition of SLC9A3. Phosphorylation at Ser-661 by SGK1 is associated with increased abundance at the cell membrane. Phosphorylation at Ser-716 by CSNK2A1 regulates SLC9A3 activity through the formation of multiple signaling complexes. As to expression, most abundant in colon and small intestine, followed by kidney and stomach. In kidney, expressed in proximal tubules and outer medulla (at protein level).

It is found in the apical cell membrane. The protein resides in the cell membrane. It localises to the recycling endosome membrane. The protein localises to the early endosome membrane. The enzyme catalyses Na(+)(in) + H(+)(out) = Na(+)(out) + H(+)(in). Seems to switch between active and inactive modes in response to various stimuli. Activated directly or indirectly by membrane phosphatidylinositol (PIs). Regulated by a variety of auxiliary proteins, which facilitate the maturation, cell surface expression and function of the transporter. Inhibited specifically by the drug tenapanor. Plasma membrane Na(+)/H(+) antiporter. Exchanges intracellular H(+) ions for extracellular Na(+) in 1:1 stoichiometry, playing a key role in salt and fluid absorption and pH homeostasis. Major apical Na(+)/H(+) exchanger in kidney and intestine playing an important role in renal and intestine Na(+) absorption and blood pressure regulation. This chain is Sodium/hydrogen exchanger 3 (Slc9a3), found in Rattus norvegicus (Rat).